A 165-amino-acid chain; its full sequence is Natriuretic peptide Na-NP (165 aa).

A signal peptide spans 1-25; that stretch reads MVGLSRLAGGGLLLVLALLPLALDG. Residues 26–83 constitute a propeptide that is removed on maturation; it reads KPAPEALHKPPTGLRTSLAALRILGYLRPDSKQSRAARDRMLHPEQQVGGGGDSRPLQ. Basic and acidic residues predominate over residues 56-68; that stretch reads SKQSRAARDRMLH. Disordered regions lie at residues 56–100 and 135–165; these read SKQS…QKID and PDSK…SRVI. The cysteines at positions 94 and 110 are disulfide-linked. Residues 129 to 165 constitute a propeptide that is removed on maturation; it reads ILEYLRPDSKRSRATRDRMLHPEQQVGGGGGGGSRVI. Positions 135–149 are enriched in basic and acidic residues; it reads PDSKRSRATRDRMLH. The segment covering 154 to 165 has biased composition (gly residues); that stretch reads VGGGGGGGSRVI.

This sequence belongs to the natriuretic peptide family. Expressed by the venom gland.

It is found in the secreted. Natriuretic peptide that dose-dependently induces the rapid relaxation of rat aortic strips phenylephrine-precontracted. Acts by stimulating cGMP production in a dose-dependent manner (by probably activating NPR1 and/or NPR2). May also show potent hypotensive effects. In Naja atra (Chinese cobra), this protein is Natriuretic peptide Na-NP.